Here is a 486-residue protein sequence, read N- to C-terminus: tRNA sulfurtransferase (486 aa).

One can recognise a THUMP domain in the interval 61-165 (AILIDVLGRI…NDHMMLIKAR (105 aa)). Residues 183 to 184 (LI), lysine 265, glycine 287, and glutamine 296 contribute to the ATP site. Residues cysteine 344 and cysteine 456 are joined by a disulfide bond. A Rhodanese domain is found at 404–481 (LSANDVILDI…NGFANVRVFA (78 aa)). Cysteine 456 functions as the Cysteine persulfide intermediate in the catalytic mechanism.

It belongs to the ThiI family.

The protein localises to the cytoplasm. It carries out the reaction [ThiI sulfur-carrier protein]-S-sulfanyl-L-cysteine + a uridine in tRNA + 2 reduced [2Fe-2S]-[ferredoxin] + ATP + H(+) = [ThiI sulfur-carrier protein]-L-cysteine + a 4-thiouridine in tRNA + 2 oxidized [2Fe-2S]-[ferredoxin] + AMP + diphosphate. It catalyses the reaction [ThiS sulfur-carrier protein]-C-terminal Gly-Gly-AMP + S-sulfanyl-L-cysteinyl-[cysteine desulfurase] + AH2 = [ThiS sulfur-carrier protein]-C-terminal-Gly-aminoethanethioate + L-cysteinyl-[cysteine desulfurase] + A + AMP + 2 H(+). It functions in the pathway cofactor biosynthesis; thiamine diphosphate biosynthesis. Functionally, catalyzes the ATP-dependent transfer of a sulfur to tRNA to produce 4-thiouridine in position 8 of tRNAs, which functions as a near-UV photosensor. Also catalyzes the transfer of sulfur to the sulfur carrier protein ThiS, forming ThiS-thiocarboxylate. This is a step in the synthesis of thiazole, in the thiamine biosynthesis pathway. The sulfur is donated as persulfide by IscS. This is tRNA sulfurtransferase from Mannheimia succiniciproducens (strain KCTC 0769BP / MBEL55E).